A 287-amino-acid chain; its full sequence is ATP synthase gamma chain (287 aa).

It belongs to the ATPase gamma chain family. F-type ATPases have 2 components, CF(1) - the catalytic core - and CF(0) - the membrane proton channel. CF(1) has five subunits: alpha(3), beta(3), gamma(1), delta(1), epsilon(1). CF(0) has three main subunits: a, b and c.

The protein localises to the cell inner membrane. In terms of biological role, produces ATP from ADP in the presence of a proton gradient across the membrane. The gamma chain is believed to be important in regulating ATPase activity and the flow of protons through the CF(0) complex. The sequence is that of ATP synthase gamma chain from Geotalea uraniireducens (strain Rf4) (Geobacter uraniireducens).